The sequence spans 244 residues: DNA repair protein RecO (244 aa).

It belongs to the RecO family.

Functionally, involved in DNA repair and RecF pathway recombination. This chain is DNA repair protein RecO, found in Geobacter metallireducens (strain ATCC 53774 / DSM 7210 / GS-15).